A 293-amino-acid polypeptide reads, in one-letter code: Probable metal transport system membrane protein CT_417 (293 aa).

The next 7 helical transmembrane spans lie at 18–38 (SLLA…YIVV), 41–61 (IVSI…IALW), 68–88 (LPIS…ICIG), 101–121 (IISM…SKLP), 135–155 (ILWV…FIVA), 187–207 (LLLI…GVIL), and 242–262 (FLGI…IAIL).

Belongs to the ABC-3 integral membrane protein family.

Its subcellular location is the cell inner membrane. Part of an ATP-driven transport system CT_415/CT_416/CT_417 for a metal. This Chlamydia trachomatis serovar D (strain ATCC VR-885 / DSM 19411 / UW-3/Cx) protein is Probable metal transport system membrane protein CT_417.